A 177-amino-acid chain; its full sequence is Disulfide bond formation protein B (177 aa).

At 1–14 (MLALLKQFSEKRFV) the chain is on the cytoplasmic side. A helical membrane pass occupies residues 15–31 (WFLLAFSSLALESTALY). Residues 32-49 (FQYGMGLQPCVLCVYERL) lie on the Periplasmic side of the membrane. A disulfide bridge connects residues Cys41 and Cys44. A helical membrane pass occupies residues 50 to 65 (AMIGLFVAGTIALLQP). Over 66-72 (RVFILRL) the chain is Cytoplasmic. The chain crosses the membrane as a helical span at residues 73–90 (IALALGLFSSIKGLLISF). Over 91–145 (RHLDLQMNPAPWKQCEFIPNFPETLPFHQWFPFIFNPTGSCNESQWSLFGLTMVQ) the chain is Periplasmic. Cys105 and Cys131 are oxidised to a cystine. Residues 146–164 (WLVVIFSLYVVILTLLLIA) traverse the membrane as a helical segment. At 165 to 177 (QVIKTRKQRRLFN) the chain is on the cytoplasmic side.

This sequence belongs to the DsbB family.

The protein localises to the cell inner membrane. Its function is as follows. Required for disulfide bond formation in some periplasmic proteins. Acts by oxidizing the DsbA protein. This is Disulfide bond formation protein B from Haemophilus influenzae (strain ATCC 51907 / DSM 11121 / KW20 / Rd).